The chain runs to 545 residues: 2-succinyl-5-enolpyruvyl-6-hydroxy-3-cyclohexene-1-carboxylate synthase (545 aa).

It belongs to the TPP enzyme family. MenD subfamily. As to quaternary structure, homodimer. Mg(2+) serves as cofactor. Mn(2+) is required as a cofactor. Requires thiamine diphosphate as cofactor.

The catalysed reaction is isochorismate + 2-oxoglutarate + H(+) = 5-enolpyruvoyl-6-hydroxy-2-succinyl-cyclohex-3-ene-1-carboxylate + CO2. It participates in quinol/quinone metabolism; 1,4-dihydroxy-2-naphthoate biosynthesis; 1,4-dihydroxy-2-naphthoate from chorismate: step 2/7. The protein operates within quinol/quinone metabolism; menaquinone biosynthesis. Functionally, catalyzes the thiamine diphosphate-dependent decarboxylation of 2-oxoglutarate and the subsequent addition of the resulting succinic semialdehyde-thiamine pyrophosphate anion to isochorismate to yield 2-succinyl-5-enolpyruvyl-6-hydroxy-3-cyclohexene-1-carboxylate (SEPHCHC). The polypeptide is 2-succinyl-5-enolpyruvyl-6-hydroxy-3-cyclohexene-1-carboxylate synthase (Nocardia farcinica (strain IFM 10152)).